The sequence spans 283 residues: Shikimate dehydrogenase (NADP(+)) (283 aa).

Shikimate-binding positions include 16–18 (SLS) and T63. K67 serves as the catalytic Proton acceptor. D79 lines the NADP(+) pocket. Residues N88 and D103 each coordinate shikimate. NADP(+) is bound by residues 128 to 132 (GAGGA), A223, and G243.

Belongs to the shikimate dehydrogenase family. In terms of assembly, homodimer.

It carries out the reaction shikimate + NADP(+) = 3-dehydroshikimate + NADPH + H(+). It functions in the pathway metabolic intermediate biosynthesis; chorismate biosynthesis; chorismate from D-erythrose 4-phosphate and phosphoenolpyruvate: step 4/7. Its function is as follows. Involved in the biosynthesis of the chorismate, which leads to the biosynthesis of aromatic amino acids. Catalyzes the reversible NADPH linked reduction of 3-dehydroshikimate (DHSA) to yield shikimate (SA). The protein is Shikimate dehydrogenase (NADP(+)) of Xanthomonas campestris pv. campestris (strain 8004).